A 208-amino-acid polypeptide reads, in one-letter code: Large ribosomal subunit protein bL9 (208 aa).

A disordered region spans residues 161 to 208; the sequence is KKRKIEKEVEEGSGTSVDESLKLDSVSDSIDTSGVNSSDKEEENNIIE. The span at 186–197 shows a compositional bias: polar residues; sequence VSDSIDTSGVNS.

It belongs to the bacterial ribosomal protein bL9 family.

Functionally, binds to the 23S rRNA. This Ehrlichia canis (strain Jake) protein is Large ribosomal subunit protein bL9.